Consider the following 436-residue polypeptide: UPF0597 protein YhaM (436 aa).

It belongs to the UPF0597 family.

The sequence is that of UPF0597 protein YhaM from Escherichia coli (strain SE11).